We begin with the raw amino-acid sequence, 966 residues long: Protein mes-1 (966 aa).

The signal sequence occupies residues methionine 1–threonine 19. At alanine 20–glutamate 470 the chain is on the extracellular side. N-linked (GlcNAc...) asparagine glycosylation is found at asparagine 62, asparagine 126, asparagine 183, asparagine 214, asparagine 251, and asparagine 372. A helical membrane pass occupies residues leucine 471–tyrosine 491. The Cytoplasmic portion of the chain corresponds to arginine 492 to valine 966. The region spanning histidine 656–valine 966 is the Protein kinase domain. Residues isoleucine 662–methionine 670 and lysine 685 each bind ATP.

It belongs to the protein kinase superfamily.

It is found in the cell membrane. In terms of biological role, during early embryogenesis, controls asymmetric cell division and the asymmetric localization of P granules of germline precursor P2 and its descendant P3. Probably upstream of tyrosine kinase src-1, plays a role in endoderm development by controlling spindle orientation during EMS blastomere cell division. Controls EMS spindle orientation probably by promoting lin-5 and gpr-1/2 enrichment at, and let-99 exclusion from the junction between P2 and EMS cells. This Caenorhabditis elegans protein is Protein mes-1.